Here is a 211-residue protein sequence, read N- to C-terminus: LexA repressor (211 aa).

The H-T-H motif DNA-binding region spans 27 to 47; it reads QTEIARAFGFKGVRAVQHHLD. Active-site for autocatalytic cleavage activity residues include serine 131 and lysine 168.

This sequence belongs to the peptidase S24 family. As to quaternary structure, homodimer.

It catalyses the reaction Hydrolysis of Ala-|-Gly bond in repressor LexA.. Its function is as follows. Represses a number of genes involved in the response to DNA damage (SOS response), including recA and lexA. In the presence of single-stranded DNA, RecA interacts with LexA causing an autocatalytic cleavage which disrupts the DNA-binding part of LexA, leading to derepression of the SOS regulon and eventually DNA repair. This chain is LexA repressor, found in Xylella fastidiosa (strain M12).